A 119-amino-acid chain; its full sequence is Hisactophilin-3 (119 aa).

G2 is lipidated: N-myristoyl glycine. The segment at 8-110 is contains several HHXH repeats; the sequence is SHHGHFLSAE…SIYTTHHHHH (103 aa). A run of 2 repeats spans residues 34-47 and 75-87. Residues 34 to 87 are 2 X 13 AA approximate repeats; that stretch reads FHVENHGHHKVAIRTHANKYVSINDNNDVYISHHFHGEHSLFHLEHHGGKVSIK.

It belongs to the hisactophilin family. Post-translationally, phosphorylated.

It is found in the cytoplasm. It localises to the cell membrane. Functionally, may act as an intracellular pH sensor that links chemotactic signals to responses in the microfilament system of the cells by nucleating actin polymerization or stabilizing the filaments. This Dictyostelium discoideum (Social amoeba) protein is Hisactophilin-3 (hatC).